The primary structure comprises 347 residues: Dihydroorotase (347 aa).

Zn(2+) contacts are provided by histidine 17 and histidine 19. Substrate contacts are provided by residues 19–21 and asparagine 45; that span reads HLR. The Zn(2+) site is built by lysine 103, histidine 140, and histidine 178. Lysine 103 is modified (N6-carboxylysine). Position 140 (histidine 140) interacts with substrate. Position 223 (leucine 223) interacts with substrate. Aspartate 251 is a binding site for Zn(2+). Aspartate 251 is a catalytic residue. Substrate is bound by residues histidine 255 and alanine 267.

The protein belongs to the metallo-dependent hydrolases superfamily. DHOase family. Class II DHOase subfamily. As to quaternary structure, homodimer. Requires Zn(2+) as cofactor.

It catalyses the reaction (S)-dihydroorotate + H2O = N-carbamoyl-L-aspartate + H(+). It functions in the pathway pyrimidine metabolism; UMP biosynthesis via de novo pathway; (S)-dihydroorotate from bicarbonate: step 3/3. Functionally, catalyzes the reversible cyclization of carbamoyl aspartate to dihydroorotate. The sequence is that of Dihydroorotase from Citrobacter koseri (strain ATCC BAA-895 / CDC 4225-83 / SGSC4696).